Here is a 144-residue protein sequence, read N- to C-terminus: 3-dehydroquinate dehydratase (144 aa).

Tyr-22 acts as the Proton acceptor in catalysis. Substrate is bound by residues Asn-73, His-79, and Asp-86. His-99 acts as the Proton donor in catalysis. Residues Ile-100 to Ser-101 and Arg-110 each bind substrate.

It belongs to the type-II 3-dehydroquinase family. As to quaternary structure, homododecamer.

The catalysed reaction is 3-dehydroquinate = 3-dehydroshikimate + H2O. It functions in the pathway metabolic intermediate biosynthesis; chorismate biosynthesis; chorismate from D-erythrose 4-phosphate and phosphoenolpyruvate: step 3/7. Functionally, catalyzes a trans-dehydration via an enolate intermediate. This chain is 3-dehydroquinate dehydratase, found in Mycobacteroides abscessus (strain ATCC 19977 / DSM 44196 / CCUG 20993 / CIP 104536 / JCM 13569 / NCTC 13031 / TMC 1543 / L948) (Mycobacterium abscessus).